The primary structure comprises 219 residues: Small ribosomal subunit protein uS3c (219 aa).

Residues 43-120 (IQNYIQKNMQ…KINITITKIT (78 aa)) enclose the KH type-2 domain.

This sequence belongs to the universal ribosomal protein uS3 family. Part of the 30S ribosomal subunit.

Its subcellular location is the plastid. The protein resides in the chloroplast. The polypeptide is Small ribosomal subunit protein uS3c (rps3) (Oenothera elata subsp. hookeri (Hooker's evening primrose)).